Consider the following 92-residue polypeptide: Small ribosomal subunit protein uS19 (92 aa).

Belongs to the universal ribosomal protein uS19 family.

Functionally, protein S19 forms a complex with S13 that binds strongly to the 16S ribosomal RNA. This chain is Small ribosomal subunit protein uS19, found in Staphylococcus epidermidis (strain ATCC 35984 / DSM 28319 / BCRC 17069 / CCUG 31568 / BM 3577 / RP62A).